Reading from the N-terminus, the 194-residue chain is Probable GTP-binding protein EngB (194 aa).

The region spanning aspartate 19–lysine 193 is the EngB-type G domain. GTP contacts are provided by residues glycine 27–serine 34, glycine 53–phenylalanine 57, aspartate 70–glycine 73, threonine 137–aspartate 140, and valine 172–serine 174. 2 residues coordinate Mg(2+): serine 34 and threonine 55.

It belongs to the TRAFAC class TrmE-Era-EngA-EngB-Septin-like GTPase superfamily. EngB GTPase family. It depends on Mg(2+) as a cofactor.

In terms of biological role, necessary for normal cell division and for the maintenance of normal septation. In Mycoplasmopsis agalactiae (strain NCTC 10123 / CIP 59.7 / PG2) (Mycoplasma agalactiae), this protein is Probable GTP-binding protein EngB.